A 275-amino-acid chain; its full sequence is Phosphate import ATP-binding protein PstB (275 aa).

One can recognise an ABC transporter domain in the interval 29–270 (VSVRDLNFYY…PTDRRTQDYI (242 aa)). Residue 61-68 (GPSGCGKS) participates in ATP binding.

It belongs to the ABC transporter superfamily. Phosphate importer (TC 3.A.1.7) family. The complex is composed of two ATP-binding proteins (PstB), two transmembrane proteins (PstC and PstA) and a solute-binding protein (PstS).

It localises to the cell inner membrane. The enzyme catalyses phosphate(out) + ATP + H2O = ADP + 2 phosphate(in) + H(+). Part of the ABC transporter complex PstSACB involved in phosphate import. Responsible for energy coupling to the transport system. The chain is Phosphate import ATP-binding protein PstB from Rhodopseudomonas palustris (strain BisB18).